A 270-amino-acid polypeptide reads, in one-letter code: Phosphonoacetaldehyde hydrolase (270 aa).

Catalysis depends on D11, which acts as the Nucleophile. Residues D11 and A13 each contribute to the Mg(2+) site. The Schiff-base intermediate with substrate role is filled by K53. Position 187 (D187) interacts with Mg(2+).

The protein belongs to the HAD-like hydrolase superfamily. PhnX family. In terms of assembly, homodimer. Requires Mg(2+) as cofactor.

It catalyses the reaction phosphonoacetaldehyde + H2O = acetaldehyde + phosphate + H(+). Its function is as follows. Involved in phosphonate degradation. The protein is Phosphonoacetaldehyde hydrolase of Salmonella gallinarum (strain 287/91 / NCTC 13346).